The primary structure comprises 366 residues: Alanine racemase (366 aa).

The Proton acceptor; specific for D-alanine role is filled by K33. At K33 the chain carries N6-(pyridoxal phosphate)lysine. Residue R129 coordinates substrate. Y253 serves as the catalytic Proton acceptor; specific for L-alanine. Position 301 (M301) interacts with substrate.

It belongs to the alanine racemase family. Requires pyridoxal 5'-phosphate as cofactor.

The enzyme catalyses L-alanine = D-alanine. The protein operates within amino-acid biosynthesis; D-alanine biosynthesis; D-alanine from L-alanine: step 1/1. Catalyzes the interconversion of L-alanine and D-alanine. May also act on other amino acids. This chain is Alanine racemase (alr), found in Xanthomonas oryzae pv. oryzae (strain MAFF 311018).